The sequence spans 444 residues: Adenylosuccinate synthetase (444 aa).

Residues 19 to 25 (GDEGKGK) and 47 to 49 (GHT) each bind GTP. Asp-20 functions as the Proton acceptor in the catalytic mechanism. Mg(2+) is bound by residues Asp-20 and Gly-47. IMP is bound by residues 20 to 23 (DEGK), 45 to 48 (NAGH), Thr-139, Arg-153, Gln-234, Thr-249, and Arg-317. His-48 functions as the Proton donor in the catalytic mechanism. 313–319 (TVTGRPR) contributes to the substrate binding site. GTP contacts are provided by residues Arg-319, 345–347 (KLD), and 427–429 (STG).

Belongs to the adenylosuccinate synthetase family. Homodimer. Requires Mg(2+) as cofactor.

It localises to the cytoplasm. The catalysed reaction is IMP + L-aspartate + GTP = N(6)-(1,2-dicarboxyethyl)-AMP + GDP + phosphate + 2 H(+). It participates in purine metabolism; AMP biosynthesis via de novo pathway; AMP from IMP: step 1/2. Plays an important role in the de novo pathway of purine nucleotide biosynthesis. Catalyzes the first committed step in the biosynthesis of AMP from IMP. The chain is Adenylosuccinate synthetase from Methylibium petroleiphilum (strain ATCC BAA-1232 / LMG 22953 / PM1).